The chain runs to 300 residues: F-box protein PP2-A15 (300 aa).

An F-box domain is found at 17–63 (MGPGLGDIPESCVACVFMYLTPPEICNLAGLNRSFRGAASSDSVWEK).

This chain is F-box protein PP2-A15 (PP2A15), found in Arabidopsis thaliana (Mouse-ear cress).